Reading from the N-terminus, the 364-residue chain is Abhydrolase domain-containing protein C57A10.08c (364 aa).

The Cytoplasmic segment spans residues 1–8; that stretch reads MYFFTISR. The chain crosses the membrane as a helical; Signal-anchor for type II membrane protein span at residues 9 to 29; that stretch reads LTSFISYGILGALGILTFLYL. Residues 30–364 are Lumenal-facing; it reads YDAYLAKSFQ…DKFSTTDHNI (335 aa). S183 acts as the Charge relay system in catalysis. N-linked (GlcNAc...) asparagine glycosylation occurs at N326. Catalysis depends on H336, which acts as the Charge relay system.

Belongs to the AB hydrolase superfamily.

It is found in the endoplasmic reticulum membrane. The sequence is that of Abhydrolase domain-containing protein C57A10.08c from Schizosaccharomyces pombe (strain 972 / ATCC 24843) (Fission yeast).